The chain runs to 869 residues: DNA mismatch repair protein MutS (869 aa).

619–626 (GPNMAGKS) contacts ATP.

This sequence belongs to the DNA mismatch repair MutS family.

This protein is involved in the repair of mismatches in DNA. It is possible that it carries out the mismatch recognition step. This protein has a weak ATPase activity. In Caldanaerobacter subterraneus subsp. tengcongensis (strain DSM 15242 / JCM 11007 / NBRC 100824 / MB4) (Thermoanaerobacter tengcongensis), this protein is DNA mismatch repair protein MutS.